Reading from the N-terminus, the 205-residue chain is Large ribosomal subunit protein uL13 (205 aa).

The protein belongs to the universal ribosomal protein uL13 family.

This Drosophila melanogaster (Fruit fly) protein is Large ribosomal subunit protein uL13 (RpL13A).